The primary structure comprises 137 residues: Large ribosomal subunit protein uL16c (137 aa).

This sequence belongs to the universal ribosomal protein uL16 family. As to quaternary structure, part of the 50S ribosomal subunit.

The protein resides in the plastid. The protein localises to the chloroplast. This Hordeum vulgare (Barley) protein is Large ribosomal subunit protein uL16c.